The sequence spans 236 residues: Sensory rhodopsin II (236 aa).

Transmembrane regions (helical) follow at residues 4–24, 38–58, 73–93, 101–121, 122–142, 167–187, and 196–216; these read ITTWFTLGLLGELLGTAVLAY, LLLIAIPGIAIVAYALMALGF, YVDWLLTTPLNVWFLALLAGA, LVVLQALTIVFGFAGAVTPSP, VSYALFAVGGALFGGVIYLLY, FVVVLWLVYPVVWLLGAAGVG, and LVVVYLDVVTKVGFGVIALLA. Position 206 is an N6-(retinylidene)lysine (Lys206).

This sequence belongs to the archaeal/bacterial/fungal opsin family. The covalent binding of retinal to the apoprotein, bacterioopsin, generates bacteriorhodopsin.

Its subcellular location is the membrane. Its function is as follows. Mediates the photorepellent response. The protein is Sensory rhodopsin II (sop2) of Haloarcula marismortui (strain ATCC 43049 / DSM 3752 / JCM 8966 / VKM B-1809) (Halobacterium marismortui).